Consider the following 418-residue polypeptide: D-inositol 3-phosphate glycosyltransferase (418 aa).

1D-myo-inositol 3-phosphate is bound at residue H9. UDP-N-acetyl-alpha-D-glucosamine contacts are provided by residues 15 to 16 (QP) and G23. Residues 20–25 (DSGGMN), K78, Y110, T134, and R154 contribute to the 1D-myo-inositol 3-phosphate site. 3 residues coordinate UDP-N-acetyl-alpha-D-glucosamine: R231, K236, and R294. Mg(2+)-binding residues include Y303, R304, and A306. Residues E316 and E324 each contribute to the UDP-N-acetyl-alpha-D-glucosamine site. T330 is a Mg(2+) binding site.

The protein belongs to the glycosyltransferase group 1 family. MshA subfamily. In terms of assembly, homodimer.

It catalyses the reaction 1D-myo-inositol 3-phosphate + UDP-N-acetyl-alpha-D-glucosamine = 1D-myo-inositol 2-acetamido-2-deoxy-alpha-D-glucopyranoside 3-phosphate + UDP + H(+). Its function is as follows. Catalyzes the transfer of a N-acetyl-glucosamine moiety to 1D-myo-inositol 3-phosphate to produce 1D-myo-inositol 2-acetamido-2-deoxy-glucopyranoside 3-phosphate in the mycothiol biosynthesis pathway. This Corynebacterium glutamicum (strain R) protein is D-inositol 3-phosphate glycosyltransferase.